We begin with the raw amino-acid sequence, 162 residues long: Universal stress protein MJ0577 (162 aa).

ATP-binding positions include Pro-11, Val-41, 127-133, and 141-143; these read GSHGKTN and SVT.

The protein belongs to the universal stress protein A family. Homodimer. Mn(2+) is required as a cofactor.

It localises to the cytoplasm. The polypeptide is Universal stress protein MJ0577 (Methanocaldococcus jannaschii (strain ATCC 43067 / DSM 2661 / JAL-1 / JCM 10045 / NBRC 100440) (Methanococcus jannaschii)).